The primary structure comprises 383 residues: uncharacterized protein (383 aa).

A helical membrane pass occupies residues 6–26 (LFLFSCLYFIGGNLKALVLGI). Residues 131–303 (YKKLKNLGFN…LAMVLLNNKY (173 aa)) form the ATP-grasp domain.

It localises to the membrane. This is an uncharacterized protein from Methanocaldococcus jannaschii (strain ATCC 43067 / DSM 2661 / JAL-1 / JCM 10045 / NBRC 100440) (Methanococcus jannaschii).